The sequence spans 356 residues: Cysteine proteinase 3 (356 aa).

The first 16 residues, 1–16, serve as a signal peptide directing secretion; it reads MSRLSLVLILVAGLFA. A propeptide spans 17-138 (activation peptide); it reads TALAGPATFA…KGNLKLTNVV (122 aa). Asn-123 carries N-linked (GlcNAc...) asparagine glycosylation. Disulfide bonds link Cys-160–Cys-203 and Cys-194–Cys-236. Cys-163 is a catalytic residue. A glycan (N-linked (GlcNAc...) asparagine) is linked at Asn-252. An intrachain disulfide couples Cys-294 to Cys-344. Residues His-303 and Asn-323 contribute to the active site.

This sequence belongs to the peptidase C1 family. In terms of tissue distribution, predominantly expressed in stem and root.

The protein localises to the vacuole. The chain is Cysteine proteinase 3 (CYP-3) from Solanum lycopersicum (Tomato).